The primary structure comprises 518 residues: Uronate isomerase (518 aa).

Belongs to the metallo-dependent hydrolases superfamily. Uronate isomerase family.

The enzyme catalyses D-glucuronate = D-fructuronate. It catalyses the reaction aldehydo-D-galacturonate = keto-D-tagaturonate. It participates in carbohydrate metabolism; pentose and glucuronate interconversion. The protein is Uronate isomerase (uxaC) of Corynebacterium glutamicum (strain ATCC 13032 / DSM 20300 / JCM 1318 / BCRC 11384 / CCUG 27702 / LMG 3730 / NBRC 12168 / NCIMB 10025 / NRRL B-2784 / 534).